The sequence spans 453 residues: Bifunctional protein GlmU (453 aa).

The segment at 1–231 is pyrophosphorylase; it reads MERTCLAVIL…EIEMTGCNNR (231 aa). UDP-N-acetyl-alpha-D-glucosamine contacts are provided by residues 10-13, K24, Q77, 82-83, 105-107, G143, E157, N172, and N229; these read LAAG, GT, and YGD. Residue D107 coordinates Mg(2+). N229 lines the Mg(2+) pocket. Residues 232–252 form a linker region; it reads AELAVIERFWQERRRREMMLA. The N-acetyltransferase stretch occupies residues 253 to 453; that stretch reads GVTMIAPETV…AIKAAKRAKA (201 aa). UDP-N-acetyl-alpha-D-glucosamine is bound by residues R318 and K336. Catalysis depends on H348, which acts as the Proton acceptor. UDP-N-acetyl-alpha-D-glucosamine contacts are provided by Y351 and N362. Residues A365, 371–372, S390, S408, and R425 each bind acetyl-CoA; that span reads NY.

The protein in the N-terminal section; belongs to the N-acetylglucosamine-1-phosphate uridyltransferase family. In the C-terminal section; belongs to the transferase hexapeptide repeat family. Homotrimer. It depends on Mg(2+) as a cofactor.

Its subcellular location is the cytoplasm. It catalyses the reaction alpha-D-glucosamine 1-phosphate + acetyl-CoA = N-acetyl-alpha-D-glucosamine 1-phosphate + CoA + H(+). The enzyme catalyses N-acetyl-alpha-D-glucosamine 1-phosphate + UTP + H(+) = UDP-N-acetyl-alpha-D-glucosamine + diphosphate. It functions in the pathway nucleotide-sugar biosynthesis; UDP-N-acetyl-alpha-D-glucosamine biosynthesis; N-acetyl-alpha-D-glucosamine 1-phosphate from alpha-D-glucosamine 6-phosphate (route II): step 2/2. The protein operates within nucleotide-sugar biosynthesis; UDP-N-acetyl-alpha-D-glucosamine biosynthesis; UDP-N-acetyl-alpha-D-glucosamine from N-acetyl-alpha-D-glucosamine 1-phosphate: step 1/1. It participates in bacterial outer membrane biogenesis; LPS lipid A biosynthesis. Its function is as follows. Catalyzes the last two sequential reactions in the de novo biosynthetic pathway for UDP-N-acetylglucosamine (UDP-GlcNAc). The C-terminal domain catalyzes the transfer of acetyl group from acetyl coenzyme A to glucosamine-1-phosphate (GlcN-1-P) to produce N-acetylglucosamine-1-phosphate (GlcNAc-1-P), which is converted into UDP-GlcNAc by the transfer of uridine 5-monophosphate (from uridine 5-triphosphate), a reaction catalyzed by the N-terminal domain. The polypeptide is Bifunctional protein GlmU (Rhizobium etli (strain CIAT 652)).